Reading from the N-terminus, the 37-residue chain is Potassium channel toxin alpha-KTx 4.8 (37 aa).

2 disulfides stabilise this stretch: C13-C33 and C17-C35.

This sequence belongs to the short scorpion toxin superfamily. Potassium channel inhibitor family. Alpha-KTx 04 subfamily. Expressed by the venom gland.

The protein resides in the secreted. Its function is as follows. Reversible blocker of voltage-gated potassium channel Kv1.2/KCNA2 (Kd=65 nM) and calcium-activated potassium channels KCa2.2/KCNN2 (Kd=575 nM) and KCa3.1/KCNN4 (Kd=59 nM). The protein is Potassium channel toxin alpha-KTx 4.8 of Centruroides margaritatus (Central American bark Scorpion).